The sequence spans 215 residues: Large ribosomal subunit protein bL25 (215 aa).

Residues 192–203 (EEATEEEEEAAE) are compositionally biased toward acidic residues. Residues 192–215 (EEATEEEEEAAEPEVIKRKEEEEE) are disordered. Positions 205-215 (EVIKRKEEEEE) are enriched in basic and acidic residues.

The protein belongs to the bacterial ribosomal protein bL25 family. CTC subfamily. In terms of assembly, part of the 50S ribosomal subunit; part of the 5S rRNA/L5/L18/L25 subcomplex. Contacts the 5S rRNA. Binds to the 5S rRNA independently of L5 and L18.

This is one of the proteins that binds to the 5S RNA in the ribosome where it forms part of the central protuberance. In Thermotoga maritima (strain ATCC 43589 / DSM 3109 / JCM 10099 / NBRC 100826 / MSB8), this protein is Large ribosomal subunit protein bL25.